Here is a 421-residue protein sequence, read N- to C-terminus: Lipid II:glycine glycyltransferase (421 aa).

The protein belongs to the FemABX family. Monomer.

The protein localises to the cytoplasm. The enzyme catalyses beta-D-GlcNAc-(1-&gt;4)-Mur2Ac(oyl-L-Ala-D-isoglutaminyl-L-Lys-D-Ala-D-Ala)-di-trans,octa-cis-undecaprenyl diphosphate + glycyl-tRNA(Gly) = beta-D-GlcNAc-(1-&gt;4)-Mur2Ac(oyl-L-Ala-D-isoglutaminyl-L-Lys-(N(6)-Gly)-D-Ala-D-Ala)-di-trans,octa-cis-undecaprenyl diphosphate + tRNA(Gly) + H(+). Catalyzes the incorporation of the first glycine of the pentaglycine interpeptide bridge, which is characteristic of the S.aureus peptidoglycan. This glycine is added to the epsilon-amino group of the L-lysine of the membrane-bound lipid II intermediate (GlcNAc-(beta-1,4)-N-acetylmuramic acid(-L-Ala-D-iGln-L-Lys-D-Ala-D-Ala)-pyrophosphoryl-undecaprenol), using glycyl-tRNA(Gly) as donor, in a ribosome-independent mechanism. Involved in methicillin resistance. The chain is Lipid II:glycine glycyltransferase (femX) from Staphylococcus aureus (strain Mu50 / ATCC 700699).